We begin with the raw amino-acid sequence, 183 residues long: Hypoxanthine/guanine phosphoribosyltransferase (183 aa).

It belongs to the purine/pyrimidine phosphoribosyltransferase family. Archaeal HPRT subfamily. As to quaternary structure, homodimer.

Its subcellular location is the cytoplasm. It catalyses the reaction IMP + diphosphate = hypoxanthine + 5-phospho-alpha-D-ribose 1-diphosphate. The enzyme catalyses GMP + diphosphate = guanine + 5-phospho-alpha-D-ribose 1-diphosphate. It participates in purine metabolism; IMP biosynthesis via salvage pathway; IMP from hypoxanthine: step 1/1. Its function is as follows. Catalyzes a salvage reaction resulting in the formation of IMP that is energically less costly than de novo synthesis. This is Hypoxanthine/guanine phosphoribosyltransferase from Methanothermococcus okinawensis (strain DSM 14208 / JCM 11175 / IH1).